A 170-amino-acid chain; its full sequence is F1 capsule antigen (170 aa).

The first 21 residues, 1–21 (MKKISSVIAIALFGTIATANA), serve as a signal peptide directing secretion. The segment at 100–150 (GNNHQFTTKVIGKDSRDFDISPKVNGENLVGDDVVLATGSQDFFVRSIGSK) is contains potential antigenic determinants that may stimulate T-cells.

The protein resides in the secreted. Its subcellular location is the capsule. This chain is F1 capsule antigen (caf1), found in Yersinia pestis.